The chain runs to 415 residues: Serine hydroxymethyltransferase (415 aa).

(6S)-5,6,7,8-tetrahydrofolate-binding positions include Leu117 and 121–123 (GHL). Position 225 is an N6-(pyridoxal phosphate)lysine (Lys225). Residues Glu241 and 349 to 351 (SPF) contribute to the (6S)-5,6,7,8-tetrahydrofolate site.

This sequence belongs to the SHMT family. As to quaternary structure, homodimer. Pyridoxal 5'-phosphate is required as a cofactor.

It localises to the cytoplasm. It catalyses the reaction (6R)-5,10-methylene-5,6,7,8-tetrahydrofolate + glycine + H2O = (6S)-5,6,7,8-tetrahydrofolate + L-serine. It functions in the pathway one-carbon metabolism; tetrahydrofolate interconversion. It participates in amino-acid biosynthesis; glycine biosynthesis; glycine from L-serine: step 1/1. In terms of biological role, catalyzes the reversible interconversion of serine and glycine with tetrahydrofolate (THF) serving as the one-carbon carrier. This reaction serves as the major source of one-carbon groups required for the biosynthesis of purines, thymidylate, methionine, and other important biomolecules. Also exhibits THF-independent aldolase activity toward beta-hydroxyamino acids, producing glycine and aldehydes, via a retro-aldol mechanism. The chain is Serine hydroxymethyltransferase from Campylobacter hominis (strain ATCC BAA-381 / DSM 21671 / CCUG 45161 / LMG 19568 / NCTC 13146 / CH001A).